The chain runs to 211 residues: Dibenzothiophene metabolism operon protein DoxH (211 aa).

Its pathway is aromatic compound metabolism; naphthalene degradation. Its function is as follows. May be involved in the conversion of 2-hydroxy-4-(2'-oxo-3,5-cyclohexadienyl)-buta-2,4-dienoate to cis-O-hydroxybenzylidenepyruvate. DoxH and doxJ encode different enzymes that may have interchangeable functions. This is Dibenzothiophene metabolism operon protein DoxH (doxH) from Pseudomonas sp. (strain C18).